Consider the following 547-residue polypeptide: CTP synthase (547 aa).

The interval 1–267 (MKTKFIFITG…DQKIAIMLRL (267 aa)) is amidoligase domain. Serine 14 provides a ligand contact to CTP. A UTP-binding site is contributed by serine 14. ATP-binding positions include 15–20 (SLGKGL) and aspartate 72. The Mg(2+) site is built by aspartate 72 and glutamate 141. Residues 148 to 150 (DIE), 188 to 193 (KTKPTQ), and lysine 224 each bind CTP. UTP is bound by residues 188-193 (KTKPTQ) and lysine 224. One can recognise a Glutamine amidotransferase type-1 domain in the interval 292–545 (TIGIVGKYVD…IRAAKTHPAG (254 aa)). Glycine 354 is a binding site for L-glutamine. Cysteine 381 (nucleophile; for glutamine hydrolysis) is an active-site residue. Residues 382–385 (LGMQ), glutamate 405, and arginine 473 each bind L-glutamine. Active-site residues include histidine 518 and glutamate 520.

It belongs to the CTP synthase family. Homotetramer.

It catalyses the reaction UTP + L-glutamine + ATP + H2O = CTP + L-glutamate + ADP + phosphate + 2 H(+). The enzyme catalyses L-glutamine + H2O = L-glutamate + NH4(+). It carries out the reaction UTP + NH4(+) + ATP = CTP + ADP + phosphate + 2 H(+). It participates in pyrimidine metabolism; CTP biosynthesis via de novo pathway; CTP from UDP: step 2/2. Its activity is regulated as follows. Allosterically activated by GTP, when glutamine is the substrate; GTP has no effect on the reaction when ammonia is the substrate. The allosteric effector GTP functions by stabilizing the protein conformation that binds the tetrahedral intermediate(s) formed during glutamine hydrolysis. Inhibited by the product CTP, via allosteric rather than competitive inhibition. Catalyzes the ATP-dependent amination of UTP to CTP with either L-glutamine or ammonia as the source of nitrogen. Regulates intracellular CTP levels through interactions with the four ribonucleotide triphosphates. The sequence is that of CTP synthase from Nitratidesulfovibrio vulgaris (strain DP4) (Desulfovibrio vulgaris).